The sequence spans 249 residues: Pleckstrin homology domain-containing family F member 2 (249 aa).

Positions 35 to 131 (VLIGEGVLTK…WMNHINKCVS (97 aa)) constitute a PH domain. The segment at 152 to 212 (DSEATVCMRC…ICDSCYDLLS (61 aa)) adopts an FYVE-type zinc-finger fold. Residues Cys-158, Cys-161, Cys-175, Cys-178, Cys-183, Cys-186, Cys-204, and Cys-207 each contribute to the Zn(2+) site. Residues 219–232 (CQSTRSDSYSQSPK) show a composition bias toward polar residues. The tract at residues 219–249 (CQSTRSDSYSQSPKSSLNDASDDDDDEDSSD) is disordered. Residues 238–249 (ASDDDDDEDSSD) are compositionally biased toward acidic residues.

The protein resides in the early endosome membrane. Its subcellular location is the endoplasmic reticulum. May play a role in early endosome fusion upstream of RAB5, hence regulating receptor trafficking and fluid-phase transport. Enhances cellular sensitivity to TNF-induced apoptosis. This chain is Pleckstrin homology domain-containing family F member 2 (PLEKHF2), found in Gallus gallus (Chicken).